The primary structure comprises 169 residues: ATP synthase subunit b (169 aa).

A helical membrane pass occupies residues 11–31 (IPSFIAQVVNFGLLLGLLYLF).

This sequence belongs to the ATPase B chain family. In terms of assembly, F-type ATPases have 2 components, F(1) - the catalytic core - and F(0) - the membrane proton channel. F(1) has five subunits: alpha(3), beta(3), gamma(1), delta(1), epsilon(1). F(0) has three main subunits: a(1), b(2) and c(10-14). The alpha and beta chains form an alternating ring which encloses part of the gamma chain. F(1) is attached to F(0) by a central stalk formed by the gamma and epsilon chains, while a peripheral stalk is formed by the delta and b chains.

The protein localises to the cell membrane. Functionally, f(1)F(0) ATP synthase produces ATP from ADP in the presence of a proton or sodium gradient. F-type ATPases consist of two structural domains, F(1) containing the extramembraneous catalytic core and F(0) containing the membrane proton channel, linked together by a central stalk and a peripheral stalk. During catalysis, ATP synthesis in the catalytic domain of F(1) is coupled via a rotary mechanism of the central stalk subunits to proton translocation. Component of the F(0) channel, it forms part of the peripheral stalk, linking F(1) to F(0). This is ATP synthase subunit b from Dehalococcoides mccartyi (strain ATCC BAA-2266 / KCTC 15142 / 195) (Dehalococcoides ethenogenes (strain 195)).